A 400-amino-acid chain; its full sequence is NADH-quinone oxidoreductase subunit D (400 aa).

Belongs to the complex I 49 kDa subunit family. As to quaternary structure, NDH-1 is composed of 14 different subunits. Subunits NuoB, C, D, E, F, and G constitute the peripheral sector of the complex.

The protein localises to the cell inner membrane. It carries out the reaction a quinone + NADH + 5 H(+)(in) = a quinol + NAD(+) + 4 H(+)(out). NDH-1 shuttles electrons from NADH, via FMN and iron-sulfur (Fe-S) centers, to quinones in the respiratory chain. The immediate electron acceptor for the enzyme in this species is believed to be menaquinone. Couples the redox reaction to proton translocation (for every two electrons transferred, four hydrogen ions are translocated across the cytoplasmic membrane), and thus conserves the redox energy in a proton gradient. This is NADH-quinone oxidoreductase subunit D from Prosthecochloris aestuarii (strain DSM 271 / SK 413).